We begin with the raw amino-acid sequence, 325 residues long: GTP 3',8-cyclase (325 aa).

The 216-residue stretch at 4–219 (TYQREINYLR…DAISAKLGPL (216 aa)) folds into the Radical SAM core domain. Arg-13 serves as a coordination point for GTP. [4Fe-4S] cluster-binding residues include Cys-20 and Cys-24. Residue Tyr-26 coordinates S-adenosyl-L-methionine. Cys-27 serves as a coordination point for [4Fe-4S] cluster. Arg-63 is a GTP binding site. Gly-67 is a binding site for S-adenosyl-L-methionine. Thr-94 is a binding site for GTP. Ser-118 contacts S-adenosyl-L-methionine. Lys-155 contributes to the GTP binding site. Met-189 is a binding site for S-adenosyl-L-methionine. 2 residues coordinate [4Fe-4S] cluster: Cys-254 and Cys-257. 259–261 (RLR) is a binding site for GTP. Cys-271 lines the [4Fe-4S] cluster pocket.

It belongs to the radical SAM superfamily. MoaA family. Monomer and homodimer. [4Fe-4S] cluster is required as a cofactor.

It carries out the reaction GTP + AH2 + S-adenosyl-L-methionine = (8S)-3',8-cyclo-7,8-dihydroguanosine 5'-triphosphate + 5'-deoxyadenosine + L-methionine + A + H(+). The protein operates within cofactor biosynthesis; molybdopterin biosynthesis. Catalyzes the cyclization of GTP to (8S)-3',8-cyclo-7,8-dihydroguanosine 5'-triphosphate. The sequence is that of GTP 3',8-cyclase from Pelotomaculum thermopropionicum (strain DSM 13744 / JCM 10971 / SI).